The primary structure comprises 222 residues: V-type ATP synthase subunit D (222 aa).

Belongs to the V-ATPase D subunit family.

Produces ATP from ADP in the presence of a proton gradient across the membrane. The chain is V-type ATP synthase subunit D from Acetivibrio thermocellus (strain ATCC 27405 / DSM 1237 / JCM 9322 / NBRC 103400 / NCIMB 10682 / NRRL B-4536 / VPI 7372) (Clostridium thermocellum).